A 545-amino-acid chain; its full sequence is Capsular polysaccharide phosphotransferase SacB (545 aa).

This sequence belongs to the stealth family.

Its function is as follows. Part of a capsular biosynthesis operon and has been suggested to be the polymerase that links individual UDP-N-acetyl-D-mannosamine monomers. In serotype A the capsule is composed of repeated units of (alpha 1-6)-linked N-acetyl-D-mannosamine-1-phosphate. Non-polar disruption of this open reading frame prevented capsule synthesis. This is Capsular polysaccharide phosphotransferase SacB (sacB) from Neisseria meningitidis serogroup A.